A 456-amino-acid chain; its full sequence is Argininosuccinate lyase (456 aa).

Belongs to the lyase 1 family. Argininosuccinate lyase subfamily.

It is found in the cytoplasm. The enzyme catalyses 2-(N(omega)-L-arginino)succinate = fumarate + L-arginine. The protein operates within amino-acid biosynthesis; L-arginine biosynthesis; L-arginine from L-ornithine and carbamoyl phosphate: step 3/3. The polypeptide is Argininosuccinate lyase (Shewanella pealeana (strain ATCC 700345 / ANG-SQ1)).